The sequence spans 332 residues: MLLLTLASHSSLQILHGAKREGFETGIVVNGKREGFYRRFSFIDNFYVYSSEDEAVEKINGTSNSVFVPHGSLIEYIGMERVSRIRTPIFGNRNLFPWESNQSKKMKLLELSNIKTPMKFENPEDVDRMVIVKLPGAKGGRGYFIGRNKQEVKEGIRRLQEKGLINNVEELIIQEYVIGIPMYFQFFYSPMLQRVEMTGIDIRYETNVDGLRRLPSDIKAEPTFVVAGNIPAVARESILPSVYEYAENFVKTTKNVVPPGAIGPFCLESIVTDTLDVVVFEFSGRIVAGTNLYVDGSPYSWLYWDEPMSVGRRIGREINLAIQKNRLNEVTT.

5-amino-1-(5-phospho-beta-D-ribosyl)imidazole-4-carboxamide contacts are provided by His9 and Ser72. In terms of domain architecture, ATP-grasp spans 93–323 (RNLFPWESNQ…IGREINLAIQ (231 aa)). ATP contacts are provided by residues 123-183 (PEDV…IPMY) and Glu205. Asn229 is a binding site for 5-amino-1-(5-phospho-beta-D-ribosyl)imidazole-4-carboxamide. Positions 268 and 281 each coordinate Mg(2+).

Belongs to the phosphohexose mutase family. It depends on Mg(2+) as a cofactor. Requires Mn(2+) as cofactor.

The catalysed reaction is 5-amino-1-(5-phospho-beta-D-ribosyl)imidazole-4-carboxamide + formate + ATP = 5-formamido-1-(5-phospho-D-ribosyl)imidazole-4-carboxamide + ADP + phosphate. The protein operates within purine metabolism; IMP biosynthesis via de novo pathway; 5-formamido-1-(5-phospho-D-ribosyl)imidazole-4-carboxamide from 5-amino-1-(5-phospho-D-ribosyl)imidazole-4-carboxamide (formate route): step 1/1. Functionally, catalyzes the ATP- and formate-dependent formylation of 5-aminoimidazole-4-carboxamide-1-beta-d-ribofuranosyl 5'-monophosphate (AICAR) to 5-formaminoimidazole-4-carboxamide-1-beta-d-ribofuranosyl 5'-monophosphate (FAICAR) in the absence of folates. The sequence is that of 5-formaminoimidazole-4-carboxamide-1-(beta)-D-ribofuranosyl 5'-monophosphate synthetase from Metallosphaera sedula (strain ATCC 51363 / DSM 5348 / JCM 9185 / NBRC 15509 / TH2).